Consider the following 91-residue polypeptide: Small ribosomal subunit protein uS15 (91 aa).

It belongs to the universal ribosomal protein uS15 family. As to quaternary structure, part of the 30S ribosomal subunit. Forms a bridge to the 50S subunit in the 70S ribosome, contacting the 23S rRNA.

Its function is as follows. One of the primary rRNA binding proteins, it binds directly to 16S rRNA where it helps nucleate assembly of the platform of the 30S subunit by binding and bridging several RNA helices of the 16S rRNA. In terms of biological role, forms an intersubunit bridge (bridge B4) with the 23S rRNA of the 50S subunit in the ribosome. This Synechococcus sp. (strain JA-2-3B'a(2-13)) (Cyanobacteria bacterium Yellowstone B-Prime) protein is Small ribosomal subunit protein uS15.